Here is a 374-residue protein sequence, read N- to C-terminus: LRR repeats and ubiquitin-like domain-containing protein At2g30105 (374 aa).

Residues 13 to 87 (IKLTVKFGGK…LMLMASQGLH (75 aa)) form the Ubiquitin-like domain. LRR repeat units lie at residues 128-151 (WKATGVIALAQANLKEIPEEVWDC), 152-175 (GSGVRVLDISENFIKEVPAKISSF), 177-200 (SMQKLFLQGNGLSDESIQWEGIAS), 201-224 (LKRLMLLSISHNNLTVLPSAMGSL), 225-248 (TSLRQLDVTNNKLTSLPNELGLLT), 250-270 (LEILKANNNRITSLPESIGNC), 272-293 (FLMEVDLSANIISELPETFTKL), 294-316 (RNLKTLELNNTGLKTLPSALFKM), and 318-340 (LQLSTLGLHNTEITVEFLRQFEG).

In Arabidopsis thaliana (Mouse-ear cress), this protein is LRR repeats and ubiquitin-like domain-containing protein At2g30105.